A 185-amino-acid polypeptide reads, in one-letter code: Ribosome-recycling factor (185 aa).

It belongs to the RRF family.

The protein resides in the cytoplasm. Functionally, responsible for the release of ribosomes from messenger RNA at the termination of protein biosynthesis. May increase the efficiency of translation by recycling ribosomes from one round of translation to another. This chain is Ribosome-recycling factor, found in Bacillus cereus (strain ATCC 10987 / NRS 248).